A 476-amino-acid polypeptide reads, in one-letter code: Glycogen synthase (476 aa).

Position 15 (Lys15) interacts with ADP-alpha-D-glucose.

It belongs to the glycosyltransferase 1 family. Bacterial/plant glycogen synthase subfamily.

The catalysed reaction is [(1-&gt;4)-alpha-D-glucosyl](n) + ADP-alpha-D-glucose = [(1-&gt;4)-alpha-D-glucosyl](n+1) + ADP + H(+). It participates in glycan biosynthesis; glycogen biosynthesis. Functionally, synthesizes alpha-1,4-glucan chains using ADP-glucose. This Leptospira biflexa serovar Patoc (strain Patoc 1 / Ames) protein is Glycogen synthase.